We begin with the raw amino-acid sequence, 134 residues long: S-protein homolog 31 (134 aa).

The N-terminal stretch at 1–21 (MKILSVFLFVFSIYIFGHVSG) is a signal peptide. Asn-87 carries N-linked (GlcNAc...) asparagine glycosylation.

The protein belongs to the plant self-incompatibility (S1) protein family.

The protein resides in the secreted. This is S-protein homolog 31 from Arabidopsis thaliana (Mouse-ear cress).